The primary structure comprises 412 residues: Phosphoribosylamine--glycine ligase (412 aa).

An ATP-grasp domain is found at 108 to 309 (KSIMKKYGVP…LAQAIIDILA (202 aa)). Residue 134-190 (LDEKGVPLVIKADGLAAGKGVTVAFDIETAKSALADIFSGSQGKVVIEEFLDGEEFS) participates in ATP binding. Mg(2+) is bound by residues E279 and N281.

This sequence belongs to the GARS family. The cofactor is Mg(2+). Requires Mn(2+) as cofactor.

The catalysed reaction is 5-phospho-beta-D-ribosylamine + glycine + ATP = N(1)-(5-phospho-beta-D-ribosyl)glycinamide + ADP + phosphate + H(+). It participates in purine metabolism; IMP biosynthesis via de novo pathway; N(1)-(5-phospho-D-ribosyl)glycinamide from 5-phospho-alpha-D-ribose 1-diphosphate: step 2/2. The protein is Phosphoribosylamine--glycine ligase of Lactococcus lactis subsp. lactis (strain IL1403) (Streptococcus lactis).